We begin with the raw amino-acid sequence, 105 residues long: uncharacterized protein (105 aa).

The next 2 membrane-spanning stretches (helical) occupy residues Ala56–Ile76 and Ile85–Tyr105.

It is found in the membrane. This is an uncharacterized protein from Aedes vexans (Inland floodwater mosquito).